A 381-amino-acid polypeptide reads, in one-letter code: CCN family member 1 (381 aa).

The first 24 residues, 1 to 24 (MSSRIARALALVVTLLHLTRLALS), serve as a signal peptide directing secretion. The IGFBP N-terminal domain maps to 25-94 (TCPAACHCPL…TALKGICRAQ (70 aa)). 6 cysteine pairs are disulfide-bonded: C26–C50, C30–C52, C32–C53, C39–C56, C64–C78, and C70–C91. Residues 98–164 (RPCEYNSRIY…GQCCEEWVCD (67 aa)) enclose the VWFC domain. At S188 the chain carries Phosphoserine; by FAM20C. Residues 228–273 (KCIVQTTSWSQCSKTCGTGISTRVTNDNPECRLVKETRICEVRPCG) form the TSP type-1 domain. Residues 279–315 (SLKKGKKCSKTKKSPEPVRFTYAGCLSVKKYRPKYCG) are heparin-binding. 5 disulfides stabilise this stretch: C286–C323, C303–C337, C314–C353, C317–C355, and C322–C359. The region spanning 286-360 (CSKTKKSPEP…QSCKCNYNCP (75 aa)) is the CTCK domain.

Belongs to the CCN family. As to quaternary structure, interaction with integrins is heparin- and cell-type-dependent and promotes cell adhesion. In skin fibroblasts it binds ITGA6/ITGB1, in endothelial cells, binds ITGAV/ITGB3 and in platelets, ITGA2B/ITGB3. Binds, in vitro, ITGAV/ITGB5.

Its subcellular location is the secreted. In terms of biological role, promotes cell proliferation, chemotaxis, angiogenesis and cell adhesion. Appears to play a role in wound healing by up-regulating, in skin fibroblasts, the expression of a number of genes involved in angiogenesis, inflammation and matrix remodeling including VEGA-A, VEGA-C, MMP1, MMP3, TIMP1, uPA, PAI-1 and integrins alpha-3 and alpha-5. CCN1-mediated gene regulation is dependent on heparin-binding. Down-regulates the expression of alpha-1 and alpha-2 subunits of collagen type-1. Promotes cell adhesion and adhesive signaling through integrin alpha-6/beta-1, cell migration through integrin alpha-v/beta-5 and cell proliferation through integrin alpha-v/beta-3. This is CCN family member 1 from Homo sapiens (Human).